The following is a 236-amino-acid chain: Exotoxin type H (236 aa).

The first 32 residues, Met-1 to Ala-32, serve as a signal peptide directing secretion.

This sequence belongs to the staphylococcal/streptococcal toxin family.

The protein localises to the secreted. Mitogenic for human peripheral blood lymphocytes. The protein is Exotoxin type H (speH) of Streptococcus pyogenes serotype M1.